The chain runs to 620 residues: Chaperone protein HscA homolog (620 aa).

This sequence belongs to the heat shock protein 70 family.

Functionally, chaperone involved in the maturation of iron-sulfur cluster-containing proteins. Has a low intrinsic ATPase activity which is markedly stimulated by HscB. This is Chaperone protein HscA homolog from Shewanella baltica (strain OS195).